We begin with the raw amino-acid sequence, 134 residues long: Holo-[acyl-carrier-protein] synthase (134 aa).

Mg(2+)-binding residues include aspartate 8 and glutamate 57.

Belongs to the P-Pant transferase superfamily. AcpS family. Mg(2+) serves as cofactor.

It is found in the cytoplasm. The catalysed reaction is apo-[ACP] + CoA = holo-[ACP] + adenosine 3',5'-bisphosphate + H(+). Its function is as follows. Transfers the 4'-phosphopantetheine moiety from coenzyme A to a Ser of acyl-carrier-protein. The chain is Holo-[acyl-carrier-protein] synthase from Rhizobium johnstonii (strain DSM 114642 / LMG 32736 / 3841) (Rhizobium leguminosarum bv. viciae).